Reading from the N-terminus, the 270-residue chain is uncharacterized protein (270 aa).

A compositionally biased stretch (basic and acidic residues) spans 22–31 (EAPQRTEASR). Residues 22 to 42 (EAPQRTEASRTHPSPFLALPG) are disordered.

This is an uncharacterized protein from Homo sapiens (Human).